The chain runs to 108 residues: Parvalbumin beta 2 (108 aa).

A1 is modified (N-acetylalanine). EF-hand domains follow at residues 38–73 and 77–108; these read KSAADIKKVFGIIDQDKSDFVEEDELKLFLQNFSAG and LTDAETATFLKAGDSDGDGKIGVDEFAAMVKG. Ca(2+) is bound by residues D51, D53, S55, F57, E59, E62, D90, D92, D94, K96, and E101.

The protein belongs to the parvalbumin family.

Its function is as follows. In muscle, parvalbumin is thought to be involved in relaxation after contraction. It binds two calcium ions. The sequence is that of Parvalbumin beta 2 from Merluccius bilinearis (Silver hake).